The sequence spans 392 residues: Large ribosomal subunit protein uL3 (392 aa).

The protein belongs to the universal ribosomal protein uL3 family.

It is found in the cytoplasm. Functionally, the L3 protein is a component of the large subunit of cytoplasmic ribosomes. The chain is Large ribosomal subunit protein uL3 (rpl3) from Aspergillus fumigatus (strain ATCC MYA-4609 / CBS 101355 / FGSC A1100 / Af293) (Neosartorya fumigata).